The chain runs to 619 residues: E3 ubiquitin-protein ligase complex SLX5-SLX8 subunit SLX5 (619 aa).

The tract at residues Met1 to Thr23 is disordered. Low complexity predominate over residues Ser11–Asn21. Phosphoserine is present on residues Ser14 and Ser29. The segment at Val63–Asn90 is disordered. A compositionally biased stretch (polar residues) spans Arg70 to Asn90. An EUC1 interaction domain region spans residues Ser201–Leu335.

In terms of assembly, component of the heterodimeric SUMO-targeted ubiquitin ligase (STUbL) complex composed of SLX5 and SLX8. Interacts with sirtuin SIR2. Interacts with KAR9. Interacts with EUC1.

Its subcellular location is the nucleus. It localises to the chromosome. The protein resides in the centromere. The protein localises to the kinetochore. It carries out the reaction S-ubiquitinyl-[E2 ubiquitin-conjugating enzyme]-L-cysteine + [acceptor protein]-L-lysine = [E2 ubiquitin-conjugating enzyme]-L-cysteine + N(6)-ubiquitinyl-[acceptor protein]-L-lysine.. Its pathway is protein modification; protein ubiquitination. Component of the SUMO-targeted ubiquitin ligase (STUbL) complex SLX5/SLX8 that mediates ubiquitination and subsequent desumoylation of sumoylated proteins and proteins containing SUMO-like domains for their degradation. The STUbL complex SLX5/SLX8 stimulates ubiquitin conjugating enzymes, including UBC1, UBC4, UBC5 and UBC13-MMS2, and mediates the proteolytic down-regulation of sumoylated proteins. The STUbL complex SLX5/SLX8 is involved in ubiquitin-mediated degradation of histone variant CSE4, preventing mislocalization to euchromatin. The complex plays an essential role in maintenance of chromosome stability and links SUMO-dependent ubiquitination to a centromere-specific function during mitosis. The complex is involved in proteolysis of spindle positioning protein KAR9 and ensures correct spindle function by regulating levels of microtubule-associated proteins. During replication, the complex helps prevent DNA lesions via recombination and has a role in localizing the DNA damage protein DCD2. The complex especially ubiquitinates the nuclease YEN1 and prevents persistent accumulation of a fraction of YEN1 associated with sites of activity in late G2/M and helps maintain the balance between pro- and anti-crossover pathways during homologous recombination. It is also involved in ubiquitin-mediated degradation of DNA repair proteins RAD52 and RAD57. Along with SIR2, promotes silencing of genes at telomeric or ribosomal DNA (rDNA) loci. Finally, the complex is recruited to distinct genomic hotspots of non-H2B protein ubiquitination (ub-hotspots) by the sumoylated transcription factor-like protein EUC1 where it ubiquitinates EUC1 and presumably other targets. In Saccharomyces cerevisiae (strain ATCC 204508 / S288c) (Baker's yeast), this protein is E3 ubiquitin-protein ligase complex SLX5-SLX8 subunit SLX5 (SLX5).